The sequence spans 94 residues: DNA-binding protein HU (94 aa).

This sequence belongs to the bacterial histone-like protein family.

Functionally, histone-like DNA-binding protein which is capable of wrapping DNA to stabilize it, and thus to prevent its denaturation under extreme environmental conditions. The chain is DNA-binding protein HU (hup) from Xylella fastidiosa (strain 9a5c).